The primary structure comprises 545 residues: Pentatricopeptide repeat-containing protein At4g18840 (545 aa).

11 PPR repeats span residues 104-138 (NGFT…PVFP), 139-173 (DKYS…GLVT), 174-204 (DVFV…MPVR), 205-239 (DAVS…NVES), 240-266 (WNFM…MPVR), 267-301 (DVVS…STEK), 303-337 (DGFT…GIEI), 338-368 (EGFL…TSKR), 369-403 (DVST…GFKP), 404-434 (NGIT…MSSV), and 440-474 (TIEH…EASI). A type E motif region spans residues 475–545 (LLESLLGACK…ERVNRSLDVA (71 aa)).

This sequence belongs to the PPR family. PCMP-E subfamily.

This is Pentatricopeptide repeat-containing protein At4g18840 (PCMP-E101) from Arabidopsis thaliana (Mouse-ear cress).